Consider the following 378-residue polypeptide: Erythronate-4-phosphate dehydrogenase (378 aa).

Residues S45 and T66 each coordinate substrate. The NAD(+) site is built by D146 and T175. R208 is a catalytic residue. Residue D232 participates in NAD(+) binding. The active site involves E237. The Proton donor role is filled by H254. G257 serves as a coordination point for NAD(+). Y258 contributes to the substrate binding site.

It belongs to the D-isomer specific 2-hydroxyacid dehydrogenase family. PdxB subfamily. As to quaternary structure, homodimer.

The protein resides in the cytoplasm. It carries out the reaction 4-phospho-D-erythronate + NAD(+) = (R)-3-hydroxy-2-oxo-4-phosphooxybutanoate + NADH + H(+). Its pathway is cofactor biosynthesis; pyridoxine 5'-phosphate biosynthesis; pyridoxine 5'-phosphate from D-erythrose 4-phosphate: step 2/5. In terms of biological role, catalyzes the oxidation of erythronate-4-phosphate to 3-hydroxy-2-oxo-4-phosphonooxybutanoate. The protein is Erythronate-4-phosphate dehydrogenase of Escherichia coli O6:H1 (strain CFT073 / ATCC 700928 / UPEC).